Here is a 221-residue protein sequence, read N- to C-terminus: Iron-sulfur cluster repair protein YtfE (221 aa).

It belongs to the RIC family. YtfE subfamily. As to quaternary structure, homodimer.

Its subcellular location is the cytoplasm. Di-iron-containing protein involved in the repair of iron-sulfur clusters damaged by oxidative and nitrosative stress conditions. The protein is Iron-sulfur cluster repair protein YtfE of Pectobacterium carotovorum subsp. carotovorum (strain PC1).